Consider the following 125-residue polypeptide: MKVLASFARRLSLFAVAAVLCVGSFFLSAAPASAQTVAIKMGADNGMLAFEPSTIEIQAGDTVQWVNNKLAPHNVVVEGQPELSHKDLAFSPGETFEATFSEPGTYTYYCEPHRGAGMVGKIVVQ.

The N-terminal stretch at 1-34 is a signal peptide; it reads MKVLASFARRLSLFAVAAVLCVGSFFLSAAPASA. A Plastocyanin-like domain is found at 35-125; that stretch reads QTVAIKMGAD…AGMVGKIVVQ (91 aa). The Cu cation site is built by histidine 73, cysteine 110, histidine 113, and methionine 118.

This sequence belongs to the plastocyanin family. It depends on Cu(2+) as a cofactor.

It localises to the cellular thylakoid membrane. Its function is as follows. Participates in electron transfer between P700 and the cytochrome b6-f complex in photosystem I. The chain is Plastocyanin (petE) from Synechococcus elongatus (strain ATCC 33912 / PCC 7942 / FACHB-805) (Anacystis nidulans R2).